The primary structure comprises 488 residues: N-acyl-D-glutamate deacylase (488 aa).

It belongs to the metallo-dependent hydrolases superfamily. N-acyl-D-amino-acid deacylase family. It depends on Zn(2+) as a cofactor.

It localises to the cytoplasm. It carries out the reaction an N-acyl-D-glutamate + H2O = D-glutamate + a carboxylate. Inhibited by cobalt, copper and EDTA. This is N-acyl-D-glutamate deacylase from Alcaligenes xylosoxydans xylosoxydans (Achromobacter xylosoxidans).